The chain runs to 20 residues: Astacin-like peptidase p18 (20 aa).

The Peptidase M12A domain maps to 1-20 (NAIPGNYYRWPYAKVPYVID).

Requires Zn(2+) as cofactor.

In terms of biological role, active against casein. Has a role as a digestive enzyme. This Argiope aurantia (Black-and-yellow garden spider) protein is Astacin-like peptidase p18.